The chain runs to 446 residues: Putative diacyglycerol O-acyltransferase Rv3371 (446 aa).

Residue His129 is the Proton acceptor of the active site. Positions 425 to 446 (SRALPSAARRGRPSVPTARARH) are disordered.

This sequence belongs to the long-chain O-acyltransferase family.

It carries out the reaction an acyl-CoA + a 1,2-diacyl-sn-glycerol = a triacyl-sn-glycerol + CoA. It catalyses the reaction di-(9Z)-octadecenoylglycerol + (9Z)-octadecenoyl-CoA = 1,2,3-tri-(9Z-octadecenoyl)-glycerol + CoA. The protein operates within glycerolipid metabolism; triacylglycerol biosynthesis. Functionally, catalyzes the terminal and only committed step in triacylglycerol synthesis by using diacylglycerol and fatty acyl CoA as substrates. Required for storage lipid synthesis. Upon expression in E.coli functions weakly as a triacylglycerol synthase, making triacylglycerol (TG) from diolein and long-chain fatty acyl-CoA. Has no wax synthase activity to produce wax esters. This is Putative diacyglycerol O-acyltransferase Rv3371 from Mycobacterium tuberculosis (strain ATCC 25618 / H37Rv).